Consider the following 288-residue polypeptide: Bifunctional protein FolD 1 (288 aa).

NADP(+) contacts are provided by residues Gly170 to Gly172 and Ile236.

This sequence belongs to the tetrahydrofolate dehydrogenase/cyclohydrolase family. Homodimer.

It catalyses the reaction (6R)-5,10-methylene-5,6,7,8-tetrahydrofolate + NADP(+) = (6R)-5,10-methenyltetrahydrofolate + NADPH. The enzyme catalyses (6R)-5,10-methenyltetrahydrofolate + H2O = (6R)-10-formyltetrahydrofolate + H(+). It functions in the pathway one-carbon metabolism; tetrahydrofolate interconversion. In terms of biological role, catalyzes the oxidation of 5,10-methylenetetrahydrofolate to 5,10-methenyltetrahydrofolate and then the hydrolysis of 5,10-methenyltetrahydrofolate to 10-formyltetrahydrofolate. In Deinococcus geothermalis (strain DSM 11300 / CIP 105573 / AG-3a), this protein is Bifunctional protein FolD 1.